The chain runs to 615 residues: Mitochondrial distribution and morphology protein 34 (615 aa).

The region spanning 1-195 (MAFNFNWSPL…LPAIIHRLSL (195 aa)) is the SMP-LTD domain. Disordered regions lie at residues 293 to 313 (SDKP…RTSS), 346 to 566 (ATTG…PQPD), and 596 to 615 (PAFW…YEPR). Over residues 301 to 313 (TPASTPNLHRTSS) the composition is skewed to polar residues. The segment covering 346–355 (ATTGLSLGSG) has biased composition (low complexity). Residues 356–367 (RHSKAGRKKKMR) are compositionally biased toward basic residues. Polar residues-rich tracts occupy residues 384 to 403 (IGST…TRTP), 435 to 446 (DATTSARASESS), and 457 to 499 (VTAQ…YSSR). A compositionally biased stretch (low complexity) spans 517–557 (QQQQFQQQQQQQQQQQQQQQQQQQQQQQQQQQQQQQQQQQQ). Residues 596–606 (PAFWEDSHQHD) show a composition bias toward basic and acidic residues.

This sequence belongs to the MDM34 family. In terms of assembly, component of the ER-mitochondria encounter structure (ERMES) or MDM complex, composed of mmm-1, mdm10, mdm12 and mdm34.

It localises to the mitochondrion outer membrane. Its function is as follows. Component of the ERMES/MDM complex, which serves as a molecular tether to connect the endoplasmic reticulum (ER) and mitochondria. Components of this complex are involved in the control of mitochondrial shape and protein biogenesis, and function in nonvesicular lipid trafficking between the ER and mitochondria. Mdm34 is required for the interaction of the ER-resident membrane protein mmm-1 and the outer mitochondrial membrane-resident beta-barrel protein mdm10. The protein is Mitochondrial distribution and morphology protein 34 of Neurospora crassa (strain ATCC 24698 / 74-OR23-1A / CBS 708.71 / DSM 1257 / FGSC 987).